The following is a 23-amino-acid chain: Protein YqfH (23 aa).

This Escherichia coli (strain K12) protein is Protein YqfH.